The chain runs to 547 residues: MRQKRKGDLSPAELMMLTIGDVIKQLVEAHEQGKDVDLNKMKTKTAAKYGLASQPRLVDIIAAVPPHYRKILIPKLKAKPVRTASGIAVVAVMCKPHRCPHISFTGNICIYCPGGPDSDFEYSTQSYTGYEPTSMRAIRARYDPFLQTRHRIEQLKQLGHSVDKVEFIVMGGTFMALPEEYRDYFIRSLHDALSGHTSNNIHEAIKYSERSFTKCVGITIETRPDYCMKRHLSDMLTYGCTRLEIGVQSVYEDVARDTNRGHTVKAACESFHLAKDSGFKVVTHMMPDLPNVGLERDIEQFIEFFENPAFRPDGLKLYPTLVIRGTGLYELWKSGRYRSYSPSDLIELVARILALVPPWTRVYRVQRDIPMPLVSSGVEHGNLRELAFARMKDLGIQCRDVRTREVGIQEIHHRVRPYQVELVRRDYVANGGWETFLSYEDPDQDILIGLLRLRKCSEETFRFELGGGVSIVRELHVYGSVVPVSSRDPTKFQHQGFGMLLMEEAERIAREEHGSGKMAVISGVGTRNYYRKIGYRLQGPYMVKMLK.

A Radical SAM core domain is found at 82–372 (RTASGIAVVA…YRVQRDIPMP (291 aa)). The [4Fe-4S] cluster site is built by Cys99, Cys109, and Cys112. Ser161 is subject to Phosphoserine. Lys164 contributes to the acetyl-CoA binding site. An N6-methyllysine modification is found at Lys229. Position 251 is a phosphotyrosine (Tyr251). Residues 396 to 547 (IQCRDVRTRE…QGPYMVKMLK (152 aa)) enclose the N-acetyltransferase domain. Acetyl-CoA-binding positions include 474–477 (ELHV), 497–499 (FGM), and Tyr530.

This sequence belongs to the ELP3 family. In terms of assembly, component of the elongator complex which consists of ELP1, ELP2, ELP3, ELP4, ELP5 and ELP6. ELP1, ELP2 and ELP3 form the elongator core complex. Interacts with alpha-tubulin. [4Fe-4S] cluster is required as a cofactor. In terms of processing, tyrosine-phosphorylated. Also serine/threonine-phosphorylated.

It is found in the cytoplasm. The protein localises to the nucleus. It catalyses the reaction uridine(34) in tRNA + acetyl-CoA + S-adenosyl-L-methionine + H2O = 5-(carboxymethyl)uridine(34) in tRNA + 5'-deoxyadenosine + L-methionine + CoA + 2 H(+). It functions in the pathway tRNA modification; 5-methoxycarbonylmethyl-2-thiouridine-tRNA biosynthesis. Catalytic tRNA acetyltransferase subunit of the elongator complex which is required for multiple tRNA modifications, including mcm5U (5-methoxycarbonylmethyl uridine), mcm5s2U (5-methoxycarbonylmethyl-2-thiouridine), and ncm5U (5-carbamoylmethyl uridine). In the elongator complex, acts as a tRNA uridine(34) acetyltransferase by mediating formation of carboxymethyluridine in the wobble base at position 34 in tRNAs. May also act as a protein lysine acetyltransferase by mediating acetylation of target proteins; such activity is however unclear in vivo and recent evidences suggest that ELP3 primarily acts as a tRNA acetyltransferase. Involved in neurogenesis: regulates the migration and branching of projection neurons in the developing cerebral cortex, through a process depending on alpha-tubulin acetylation. Required for acetylation of GJA1 in the developing cerebral cortex. The protein is Elongator complex protein 3 of Mus musculus (Mouse).